The following is a 351-amino-acid chain: Adenine deaminase (351 aa).

The Zn(2+) site is built by His-20, His-22, and His-200. The Proton donor role is filled by Glu-203. Residue Asp-281 participates in Zn(2+) binding. Position 282 (Asp-282) interacts with substrate.

Belongs to the metallo-dependent hydrolases superfamily. Adenosine and AMP deaminases family. Adenine deaminase type 2 subfamily. Zn(2+) is required as a cofactor.

The catalysed reaction is adenine + H2O + H(+) = hypoxanthine + NH4(+). In terms of biological role, catalyzes the hydrolytic deamination of adenine to hypoxanthine. Plays an important role in the purine salvage pathway and in nitrogen catabolism. In Cupriavidus taiwanensis (strain DSM 17343 / BCRC 17206 / CCUG 44338 / CIP 107171 / LMG 19424 / R1) (Ralstonia taiwanensis (strain LMG 19424)), this protein is Adenine deaminase.